A 507-amino-acid chain; its full sequence is ATP synthase subunit alpha, plastid (507 aa).

ATP is bound at residue 170–177 (GDRQTGKT).

This sequence belongs to the ATPase alpha/beta chains family. As to quaternary structure, F-type ATPases have 2 components, CF(1) - the catalytic core - and CF(0) - the membrane proton channel. CF(1) has five subunits: alpha(3), beta(3), gamma(1), delta(1), epsilon(1). CF(0) has four main subunits: a, b, b' and c.

It localises to the plastid membrane. The catalysed reaction is ATP + H2O + 4 H(+)(in) = ADP + phosphate + 5 H(+)(out). Produces ATP from ADP in the presence of a proton gradient across the membrane. The alpha chain is a regulatory subunit. The polypeptide is ATP synthase subunit alpha, plastid (Cuscuta obtusiflora (Peruvian dodder)).